Reading from the N-terminus, the 463-residue chain is Argininosuccinate lyase (463 aa).

It belongs to the lyase 1 family. Argininosuccinate lyase subfamily.

It localises to the cytoplasm. It carries out the reaction 2-(N(omega)-L-arginino)succinate = fumarate + L-arginine. It participates in amino-acid biosynthesis; L-arginine biosynthesis; L-arginine from L-ornithine and carbamoyl phosphate: step 3/3. The sequence is that of Argininosuccinate lyase from Chlorobaculum tepidum (strain ATCC 49652 / DSM 12025 / NBRC 103806 / TLS) (Chlorobium tepidum).